A 213-amino-acid polypeptide reads, in one-letter code: RxLR effector protein PexRD1 (213 aa).

A signal peptide spans 1-19; the sequence is MRACNTLLPTAIVLTSCDA. The RxLR-dEER motif lies at 50 to 77; that stretch reads RQLRGFYATENTDPVNNQDTAHEDGEER.

Belongs to the RxLR effector family.

The protein resides in the secreted. Its subcellular location is the host nucleus. In terms of biological role, effector that enhances P.infestans colonization of Nicotiana benthamiana leaves. In Phytophthora infestans (strain T30-4) (Potato late blight agent), this protein is RxLR effector protein PexRD1.